The sequence spans 47 residues: uncharacterized protein (47 aa).

A disordered region spans residues 22–47 (VGPRTKRANQASPPVGRHSSRLMCPG).

This is an uncharacterized protein from Saccharomyces cerevisiae (strain ATCC 204508 / S288c) (Baker's yeast).